The chain runs to 331 residues: Ketol-acid reductoisomerase (NADP(+)) (331 aa).

The KARI N-terminal Rossmann domain maps to 2–181; sequence LEKYYDKDAD…GATRAVVFET (180 aa). NADP(+) contacts are provided by residues 25–28, R48, S52, and 82–85; these read YGSQ and DEQQ. H107 is an active-site residue. G133 serves as a coordination point for NADP(+). A KARI C-terminal knotted domain is found at 182-327; it reads SFREETETDL…KEIRATMPQF (146 aa). The Mg(2+) site is built by D190, E194, E226, and E230. S251 lines the substrate pocket.

This sequence belongs to the ketol-acid reductoisomerase family. Mg(2+) serves as cofactor.

It carries out the reaction (2R)-2,3-dihydroxy-3-methylbutanoate + NADP(+) = (2S)-2-acetolactate + NADPH + H(+). The enzyme catalyses (2R,3R)-2,3-dihydroxy-3-methylpentanoate + NADP(+) = (S)-2-ethyl-2-hydroxy-3-oxobutanoate + NADPH + H(+). It functions in the pathway amino-acid biosynthesis; L-isoleucine biosynthesis; L-isoleucine from 2-oxobutanoate: step 2/4. Its pathway is amino-acid biosynthesis; L-valine biosynthesis; L-valine from pyruvate: step 2/4. In terms of biological role, involved in the biosynthesis of branched-chain amino acids (BCAA). Catalyzes an alkyl-migration followed by a ketol-acid reduction of (S)-2-acetolactate (S2AL) to yield (R)-2,3-dihydroxy-isovalerate. In the isomerase reaction, S2AL is rearranged via a Mg-dependent methyl migration to produce 3-hydroxy-3-methyl-2-ketobutyrate (HMKB). In the reductase reaction, this 2-ketoacid undergoes a metal-dependent reduction by NADPH to yield (R)-2,3-dihydroxy-isovalerate. This chain is Ketol-acid reductoisomerase (NADP(+)), found in Methanospirillum hungatei JF-1 (strain ATCC 27890 / DSM 864 / NBRC 100397 / JF-1).